A 258-amino-acid chain; its full sequence is Tryptophan synthase alpha chain (258 aa).

Active-site proton acceptor residues include E46 and D57.

The protein belongs to the TrpA family. In terms of assembly, tetramer of two alpha and two beta chains.

The catalysed reaction is (1S,2R)-1-C-(indol-3-yl)glycerol 3-phosphate + L-serine = D-glyceraldehyde 3-phosphate + L-tryptophan + H2O. It functions in the pathway amino-acid biosynthesis; L-tryptophan biosynthesis; L-tryptophan from chorismate: step 5/5. Its function is as follows. The alpha subunit is responsible for the aldol cleavage of indoleglycerol phosphate to indole and glyceraldehyde 3-phosphate. In Phocaeicola vulgatus (strain ATCC 8482 / DSM 1447 / JCM 5826 / CCUG 4940 / NBRC 14291 / NCTC 11154) (Bacteroides vulgatus), this protein is Tryptophan synthase alpha chain.